Here is a 1053-residue protein sequence, read N- to C-terminus: 3-hydroxy-3-methylglutaryl-coenzyme A reductase (1053 aa).

Residues 1 to 8 (MIYKLAAR) are Cytoplasmic-facing. The helical transmembrane segment at 9–29 (YPIQVIAIVGILVSMAYFSFL) threads the bilayer. The Lumenal portion of the chain corresponds to 30–203 (EALTQEDFPV…LKIASQASKT (174 aa)). Asn-137 carries an N-linked (GlcNAc...) asparagine glycan. A helical transmembrane segment spans residues 204 to 224 (ELLIVGTAYACMLISIVSLYL). Positions 204–365 (ELLIVGTAYA…FSFFVAILTL (162 aa)) constitute an SSD domain. Topologically, residues 225–232 (KMRRLGSK) are cytoplasmic. The chain crosses the membrane as a helical span at residues 233–253 (FWLFFSVLLSTLFSVQFAMTL). Topologically, residues 254–258 (VRASG) are lumenal. Residues 259–279 (VRISLVSLIESLPFLINVVAL) traverse the membrane as a helical segment. Topologically, residues 280 to 320 (DKAAELTRQVITRCSVSDSHSPMHEDIAKACRNAAPPILRH) are cytoplasmic. 2 helical membrane passes run 321–341 (FSFGIVVLAIFSYCNFGIKQF) and 342–362 (FLFAAVMIYDLLLLFSFFVAI). The Cytoplasmic portion of the chain corresponds to 363-417 (LTLKLEMRRYNAKDDVRKVLIEEGLSESTARHVADGNDSSATTSAGSRYFKVRYG). The helical transmembrane segment at 418–438 (TKIILFIFIAFNLFELCSIPF) threads the bilayer. At 439–526 (KHYAATSAAA…NNWSHYISAS (88 aa)) the chain is on the lumenal side. A glycan (N-linked (GlcNAc...) asparagine) is linked at Asn-518. The helical transmembrane segment at 527 to 547 (FLSKWIVCALSLSIAVNVFLL) threads the bilayer. Residues 548 to 1053 (NAARLNSIKE…KSVNSRVPGR (506 aa)) lie on the Cytoplasmic side of the membrane. Glu-712 (charge relay system) is an active-site residue. Residue 718 to 724 (STMRGCK) participates in CoA binding. Residues 779–781 (SRF) and 806–814 (DAMGMNMIS) contribute to the NADP(+) site. The active-site Charge relay system is the Lys-846. 875-877 (VLK) is a CoA binding site. Asp-922 functions as the Charge relay system in the catalytic mechanism. 1017 to 1018 (SH) contacts CoA. Catalysis depends on His-1018, which acts as the Proton donor. Position 1022 to 1023 (1022 to 1023 (NR)) interacts with NADP(+). A Phosphoserine modification is found at Ser-1024. Phosphothreonine is present on Thr-1028. The disordered stretch occupies residues 1028 to 1053 (TPAMDSSAKKPATDALKSVNSRVPGR).

Belongs to the HMG-CoA reductase family.

Its subcellular location is the endoplasmic reticulum membrane. The protein localises to the nucleus envelope. The catalysed reaction is (R)-mevalonate + 2 NADP(+) + CoA = (3S)-3-hydroxy-3-methylglutaryl-CoA + 2 NADPH + 2 H(+). Its pathway is metabolic intermediate biosynthesis; (R)-mevalonate biosynthesis; (R)-mevalonate from acetyl-CoA: step 3/3. Its function is as follows. Part of the first module of ergosterol biosynthesis pathway that includes the early steps of the pathway, conserved across all eukaryotes, and which results in the formation of mevalonate from acetyl-coenzyme A (acetyl-CoA). Hmg1 catalyzes the reduction of hydroxymethylglutaryl-CoA (HMG-CoA) to mevalonate. The first module starts with the action of the cytosolic acetyl-CoA acetyltransferase eg10 that catalyzes the formation of acetoacetyl-CoA. The hydroxymethylglutaryl-CoA synthases erg13 then condenses acetyl-CoA with acetoacetyl-CoA to form HMG-CoA. The rate-limiting step of the early module is the reduction to mevalonate by the 3-hydroxy-3-methylglutaryl-coenzyme A (HMG-CoA) reductases hcs1. The polypeptide is 3-hydroxy-3-methylglutaryl-coenzyme A reductase (Schizosaccharomyces pombe (strain 972 / ATCC 24843) (Fission yeast)).